The primary structure comprises 403 residues: Phosphoglycerate kinase (403 aa).

Substrate-binding positions include 21–23 (DFN), R37, 60–63 (HLGR), R125, and R158. ATP is bound by residues K209, E332, and 359–362 (GGDS).

Belongs to the phosphoglycerate kinase family. In terms of assembly, monomer.

The protein resides in the cytoplasm. The catalysed reaction is (2R)-3-phosphoglycerate + ATP = (2R)-3-phospho-glyceroyl phosphate + ADP. The protein operates within carbohydrate degradation; glycolysis; pyruvate from D-glyceraldehyde 3-phosphate: step 2/5. The protein is Phosphoglycerate kinase of Koribacter versatilis (strain Ellin345).